Reading from the N-terminus, the 1221-residue chain is MVLKRAADMVPKGFRDLVEPILDDCADLEELADRVVETEMEPDEVRRRDVGNTDSNEPVAIFGSSCVLCGGDCSSVRLTSRIGICERCLPVDTETLREVLKEARKRHGYVGEALLMFILVERYSPDRVEEFFRRYVWPELFTEIVDRVFDRATGFRLYSAQRVWTRRLVKGCSFSILAPTGTGKTSWGSLVAAVFGHAGRRVYYLVPTTTLVRQVENRIKGFARDAELDVDVVAYHAAMPTQAKREALERISSGDFDVLITTAQFLVHRVEDLEKLNFDLILVDDVDAIIRGTGRNVDRVLRVAGLEQEEIDSAYRLATLRRRYYSLRDWLRSLEDRGDKRAERVREELREVEREIEELEELLKRVKKERDLARIVFMSATGAAAPSRRLAVVRELFDFEVGAGGEGLRNIQDIAVISEPSPEAVERIVRKAGVKGGLIFVPQRLPGEKKAREIVEELAEHLRSSGIEARAIHAGTPAEEREEAIDGFSEGDVDVLVAVASPYGVIVRGLDLPQAARYAVFYGVPRQRIRLTPREEDLKDPTYVASALSNLARLLDDRRARSRLEGVAGRLWRIIRRGTWIRERLEEAVEPLSLNTLMKLAKRDPEDIAEQLDVDRWLARHVQTLAEGVRELTRLLGDPDRVKALAEEATTVAVYEEGEEAYLEVPDLRTYIQASGRVSRLFAGGVTFGLSFVLCPEDERELRTLNGLIRRMSYTYGSEFEWRSYPKSLDMKEIGLELKEISDEELEELVRKVDEDRERVRKVLAGELKPEETGRLARSALMIVESPNKARMIASLFSQRPSRRRLNGGVAYEAAADGLHLTVVATQGHVADLVEEPGVHGVLRIDERWVPMYDVLGRCSECGEQVVGSEECPNCGGEVELKTPLLESIRELASEADVILIGTDPDTEGEKIGWDVFNYLGWTTAQVYRTEFHEVTRRGISEALKEESWKNVDAGRVSAQILRRVADRWIGFSLSQDLWDVFKHLEIKLGELPSGSRIEVRLDIPSGVEVVDFRRTFDEDSSVRSRSVRLRREGDEYVVRTRISRGGDVTYTATLLDPNRKLGDRNGVRPELVRVRASVNGEPVDPNVKLEPMTWLSAGRVQTPVLGWIIDRAREYRETEFYACRAEVPADDVTIRALIEELKVPRALTEKLDEATIRVLSKIAEEGPDAEFSEEEVGRFTETELFERKDGRYRLSEEGRKVLESEGVIGLMLHLAGVSGR.

The RG N-terminal-type zinc finger occupies 56–97; sequence NEPVAIFGSSCVLCGGDCSSVRLTSRIGICERCLPVDTETLR. Zn(2+) contacts are provided by cysteine 66, cysteine 69, cysteine 85, and cysteine 88. ATP contacts are provided by residues glutamine 161 and 178-185; that span reads APTGTGKT. One can recognise a Helicase ATP-binding domain in the interval 165-400; it reads TRRLVKGCSF…AVVRELFDFE (236 aa). The DEAD box signature appears at 284–287; sequence DDVD. The Helicase C-terminal domain maps to 424–600; that stretch reads AVERIVRKAG…PLSLNTLMKL (177 aa). The 157-residue stretch at 779-935 folds into the Toprim domain; it reads SALMIVESPN…QVYRTEFHEV (157 aa). Glutamate 785 lines the Mg(2+) pocket. The RG C-terminal-type zinc finger occupies 856–882; that stretch reads LGRCSECGEQVVGSEECPNCGGEVELK. Zn(2+) contacts are provided by cysteine 859, cysteine 862, cysteine 872, and cysteine 875. Aspartate 904 is a Mg(2+) binding site. The Topo IA-type catalytic domain maps to 953 to 1221; it reads DAGRVSAQIL…MLHLAGVSGR (269 aa).

It in the C-terminal section; belongs to the type IA topoisomerase family. The protein in the N-terminal section; belongs to the DEAD box helicase family. DDVD subfamily. In terms of assembly, heterodimer of an RgyrA and RgyrB subunit. The topoisomerase domain is shared between the two subunits. It depends on Zn(2+) as a cofactor. The cofactor is Mg(2+). Post-translationally, the N-terminus is partially blocked.

The protein resides in the cytoplasm. The catalysed reaction is ATP + H2O = ADP + phosphate + H(+). Functionally, modifies the topological state of DNA by introducing positive supercoils in an ATP-dependent process; dATP also allows positive supercoiling. Increases the linking number in steps of +1. Only this subunit binds ATP, it does so in a DNA- and RgyA-independent manner. Hydrolyzes ATP only in the presence of DNA. The RgyA subunit transiently cleaves a single DNA strand and remains covalently bound to the 5' DNA end probably through a tyrosine residue. It changes linking number in steps of one, and nicks DNA preferentially at 5'-CNNN | 3'-sites with a strong preference for 4 pyrimidine residues. There are about 1000 heterodimers per cell. May be involved in rewinding the DNA strands in the regions of the chromosome that have opened up to allow transcription or replication. This subunit expressed in E.coli only has DNA-dependent ATPase activity at 80 degrees Celsius. Reverse gyrase activity is reconstituted after incubation at 80 degrees Celsius for 5 minutes, positive supercoiling requires ATP and Mg(2+). In the presence of ATP it binds and nicks substrate but does not make closed product. The sequence is that of Reverse gyrase subunit B from Methanopyrus kandleri (strain AV19 / DSM 6324 / JCM 9639 / NBRC 100938).